Here is a 683-residue protein sequence, read N- to C-terminus: Stromal interaction molecule 1 (683 aa).

A signal peptide spans 1 to 22 (MDVCARLALWLLWGLLLHHGQS). Topologically, residues 23 to 211 (LSQSHSEKAT…LLTRHNHLKD (189 aa)) are extracellular. EF-hand domains lie at 62 to 95 (SFDA…EDLN) and 100 to 124 (TVKH…AWKS). Ca(2+) contacts are provided by Asp-74, Asp-76, Asn-78, Asp-80, and Glu-85. 2 N-linked (GlcNAc...) asparagine glycosylation sites follow: Asn-129 and Asn-169. The SAM domain maps to 130 to 198 (WTVDEVVQWL…QLKALDTVLF (69 aa)). Residues 212–232 (FMLVVSIVIGVGGCWFAYIQN) traverse the membrane as a helical segment. At 233 to 683 (RYSKEHMKKM…LKIFKKPLKK (451 aa)) the chain is on the cytoplasmic side. The stretch at 246–440 (LEGLHRAEQS…IEILCGFQIV (195 aa)) forms a coiled coil. The residue at position 255 (Ser-255) is a Phosphoserine. Positions 342-440 (PEALQKWLQL…IEILCGFQIV (99 aa)) are SOAR/CAD. The contributes to fast Ca(2+)-dependent inactivation of CRAC channels stretch occupies residues 473–481 (DDVDDMDEE). The segment covering 488-497 (MQSPSLQSSV) has biased composition (low complexity). Residues 488-535 (MQSPSLQSSVRQRLTEPQHGLGSQRDLTHSDSESSLHMSDRQRLAPKP) form a disordered region. Thr-502 carries the phosphothreonine modification. Ser-510 carries the phosphoserine modification. The span at 513–530 (DLTHSDSESSLHMSDRQR) shows a compositional bias: basic and acidic residues. Thr-515 carries the phosphothreonine modification. Phosphoserine occurs at positions 517, 519, 521, 522, 565, 573, 606, 616, and 626. A disordered region spans residues 597-683 (LSSPALPSGS…LKIFKKPLKK (87 aa)). The Microtubule tip localization signal signature appears at 640 to 643 (TRIP). Acidic residues predominate over residues 653–664 (EEDNGSIGEETD). Phosphoserine is present on Ser-658. Phosphothreonine is present on Thr-663. Residue Ser-666 is modified to Phosphoserine. A compositionally biased stretch (basic residues) spans 668–683 (GRKKFPLKIFKKPLKK). The tract at residues 670–683 (KKFPLKIFKKPLKK) is required for generation of inwardly rectifying CRAC currents.

Monomer in the presence of Ca(2+). It oligomerizes in absence of Ca(2+). Forms homooligomers and heterooligomers with STIM2. Interacts with pore-forming subunits of CRAC channels, ORAI1, ORAI2 and ORAI3; this interaction is potentiated upon Ca(2+) store depletion. Interacts (via the transmembrane region and the SOAR/CAD domain) with SPPL3; the interaction promotes the binding of STIM1 to ORAI1. Interacts with ORAI1. Interacts with MAPRE1; probably required for targeting to the growing microtubule plus ends. Interacts with CRACR2A/EFCAB4B; the interaction is direct and takes place in absence of Ca(2+). Forms a complex with CRACR2A/EFCAB4B and ORAI1 at low concentration of Ca(2+), the complex dissociates at elevated Ca(2+) concentrations. Interacts with SARAF, promoting a slow inactivation of STIM1-dependent SOCE activity, possibly by facilitating the deoligomerization of STIM1. Interacts with EFHB; the interaction takes place upon Ca(2+)-store depletion and inhibits the association with SARAF. Interacts with ASPH. Interacts with SLC35G1; intracellular Ca(2+)-dependent. May interact with ATP1A1, ATP2A2, ATP2B1, ATP2B4, KPNB1 and XPO1; through SLC35G1. Interacts with TMEM203. Interacts with STIMATE, promoting STIM1 conformational switch. Interacts with TMEM178A. Interacts with CASQ1 (via C-terminal end and preferentially with the monomeric form); this interaction increases in response to a depletion of intracellular calcium, decreases both STIM1 aggregation and clustering, interaction of STIM1 with ORAI1 and store-operated Ca(2+) entry (SOCE) activity. Post-translationally, glycosylation is required for cell surface expression. Phosphorylated predominantly on Ser residues.

It localises to the cell membrane. It is found in the endoplasmic reticulum membrane. The protein resides in the sarcoplasmic reticulum. The protein localises to the cytoplasm. Its subcellular location is the cytoskeleton. In terms of biological role, acts as a Ca(2+) sensor that gates two major inward rectifying Ca(2+) channels at the plasma membrane: Ca(2+) release-activated Ca(2+) (CRAC) channels and arachidonate-regulated Ca(2+)-selective (ARC) channels. Plays a role in mediating store-operated Ca(2+) entry (SOCE), a Ca(2+) influx following depletion of intracellular Ca(2+) stores. Upon Ca(2+) depletion, translocates from the endoplasmic reticulum to the plasma membrane where it activates CRAC channel pore-forming subunits ORA1, ORA2 and ORAI3 to generate sustained and oscillatory Ca(2+) entry. Involved in enamel formation. The polypeptide is Stromal interaction molecule 1 (STIM1) (Bos taurus (Bovine)).